Here is a 315-residue protein sequence, read N- to C-terminus: MNQLDQLKRLTTVVADTGNFLQLAQFAPQDATTNPSLILKAVQQAEYAPLLTETVARHRGLPLDQVVDQVLVRFGLEILKIVPGRVSTEVDARLSFDTAATVARAHRIINLYDDAGIGRERVLIKIASTWEGIQAAAELEREGIHCNLTLLFAFAQAVACGAAGVQLISPFVGRIYDWYKKSAGANWDEAAMAGANDPGVKSVAQIYSYYKKFGIATEVMGASFRNVGQITALAGCDLLTISPDLLAQLQASEEPISAALDAAAARDAAIDAVRYDEPGFRFALNEDAMATEKLAEGIRAFAADAAKLDKMILAL.

Lys-125 functions as the Schiff-base intermediate with substrate in the catalytic mechanism.

It belongs to the transaldolase family. Type 1 subfamily. In terms of assembly, homodimer.

Its subcellular location is the cytoplasm. It carries out the reaction D-sedoheptulose 7-phosphate + D-glyceraldehyde 3-phosphate = D-erythrose 4-phosphate + beta-D-fructose 6-phosphate. Its pathway is carbohydrate degradation; pentose phosphate pathway; D-glyceraldehyde 3-phosphate and beta-D-fructose 6-phosphate from D-ribose 5-phosphate and D-xylulose 5-phosphate (non-oxidative stage): step 2/3. Transaldolase is important for the balance of metabolites in the pentose-phosphate pathway. The polypeptide is Transaldolase (Leptothrix cholodnii (strain ATCC 51168 / LMG 8142 / SP-6) (Leptothrix discophora (strain SP-6))).